Reading from the N-terminus, the 790-residue chain is Cadherin-20 (790 aa).

The N-terminal stretch at 1–25 (MSCKRSYHRHCALVYYMVLLDLTNA) is a signal peptide. A propeptide spanning residues 26–52 (VFEFSHPLIRDSGNSQSRQLLHHRLKR) is cleaved from the precursor. Residues 26-612 (VFEFSHPLIR…PYTLPISLSR (587 aa)) lie on the Extracellular side of the membrane. Cadherin domains are found at residues 54-158 (WVWN…EPKF), 159-267 (LDGP…PPRF), 268-382 (PQKH…PPVF), 383-487 (GSSF…APTF), and 487-605 (FTKF…EPYT). Asn254, Asn283, Asn413, Asn454, and Asn535 each carry an N-linked (GlcNAc...) asparagine glycan. Residues 613–633 (GALIAILTCIFVLLVLVLLIL) form a helical membrane-spanning segment. At 634–790 (SMRRHRKQPY…YGTKDNNGSL (157 aa)) the chain is on the cytoplasmic side.

In terms of tissue distribution, detected in embryonic posterior neural plate, embryonic neural tube, sulcus limitans and embryonic kidney.

It is found in the cell membrane. Its function is as follows. Cadherins are calcium-dependent cell adhesion proteins. They preferentially interact with themselves in a homophilic manner in connecting cells; cadherins may thus contribute to the sorting of heterogeneous cell types. This is Cadherin-20 (cdh20) from Xenopus laevis (African clawed frog).